A 506-amino-acid chain; its full sequence is Ecdysteroid UDP-glucosyltransferase (506 aa).

The signal sequence occupies residues 1–18; sequence MTAYLIVFCLCCWSAARS.

It belongs to the UDP-glycosyltransferase family.

In terms of biological role, catalyzes the transfer of glucose from UDP-glucose to ecdysteroids which are insect molting hormones. Expression of egt interferes with normal insect development and block molting. The sequence is that of Ecdysteroid UDP-glucosyltransferase (EGT) from Lymantria dispar multicapsid nuclear polyhedrosis virus (LdMNPV).